The sequence spans 122 residues: Small ribosomal subunit protein uS13 (122 aa).

The tract at residues 96–122 (LPVHGQRTKTNARTRKGPARTVAGKKK) is disordered.

Belongs to the universal ribosomal protein uS13 family. As to quaternary structure, part of the 30S ribosomal subunit. Forms a loose heterodimer with protein S19. Forms two bridges to the 50S subunit in the 70S ribosome.

In terms of biological role, located at the top of the head of the 30S subunit, it contacts several helices of the 16S rRNA. In the 70S ribosome it contacts the 23S rRNA (bridge B1a) and protein L5 of the 50S subunit (bridge B1b), connecting the 2 subunits; these bridges are implicated in subunit movement. Contacts the tRNAs in the A and P-sites. The protein is Small ribosomal subunit protein uS13 of Geotalea daltonii (strain DSM 22248 / JCM 15807 / FRC-32) (Geobacter daltonii).